The primary structure comprises 119 residues: MPFPVPDPFVWDTSFQVFYFKLDDQHRAIFETLFNSTNDNTPGNLQLFYIVTANHFEEEEGWMVSASYGGYDAHKKLHEEFLAKVRSFSAPVSKENLFYAKDWLVQHIKTIDFKYKQLL.

His-26, His-55, Glu-59, His-74, His-78, His-107, and Asp-112 together coordinate Fe cation.

It belongs to the hemerythrin family.

In terms of biological role, hemerythrin is a respiratory protein in blood cells of certain marine worms. The oxygen-binding site in each chain contains two iron atoms. In Sipunculus nudus (Sipunculan worm), this protein is Hemerythrin subunit B.